Consider the following 179-residue polypeptide: MSRIGKIPVQVPSGVDVDIADRVVTVKGPKGTLTHRVPAPIVVARGDDGALVVTRPDDERTSRSLHGLTRTLLANLVTGVTQGYQKNLEIVGTGYRVTAKGSSLEFALGFSHPVTVSAPEGITFAVESPTKFSVAGIDKQQVGEVAANIRKIRKPEPYKGKGVRYAGEQVRRKVGKAGK.

The protein belongs to the universal ribosomal protein uL6 family. In terms of assembly, part of the 50S ribosomal subunit.

Functionally, this protein binds to the 23S rRNA, and is important in its secondary structure. It is located near the subunit interface in the base of the L7/L12 stalk, and near the tRNA binding site of the peptidyltransferase center. The sequence is that of Large ribosomal subunit protein uL6 from Beutenbergia cavernae (strain ATCC BAA-8 / DSM 12333 / CCUG 43141 / JCM 11478 / NBRC 16432 / NCIMB 13614 / HKI 0122).